A 264-amino-acid chain; its full sequence is Transmembrane protein 270 (264 aa).

Helical transmembrane passes span 31–51, 74–94, and 133–153; these read HLYR…LGLA, LSLA…LLLW, and LFLS…LLTW. The span at 227–236 shows a compositional bias: polar residues; that stretch reads AQEVKSQETS. The disordered stretch occupies residues 227–264; sequence AQEVKSQETSGPPPQFLIPESSTTESGPLPPQPETPGE. Over residues 254–264 the composition is skewed to pro residues; it reads PLPPQPETPGE.

As to expression, testis.

It localises to the membrane. In Mus musculus (Mouse), this protein is Transmembrane protein 270.